The primary structure comprises 272 residues: Shikimate dehydrogenase (NADP(+)) (272 aa).

Residues 19–21 (SLS) and T66 contribute to the shikimate site. The active-site Proton acceptor is the K70. E82 lines the NADP(+) pocket. Shikimate is bound by residues N91 and D106. NADP(+) contacts are provided by residues 129 to 133 (GAGGA), 151 to 156 (NRTPEK), and I214. Y216 serves as a coordination point for shikimate. Residue G237 participates in NADP(+) binding.

The protein belongs to the shikimate dehydrogenase family. Homodimer.

The enzyme catalyses shikimate + NADP(+) = 3-dehydroshikimate + NADPH + H(+). It participates in metabolic intermediate biosynthesis; chorismate biosynthesis; chorismate from D-erythrose 4-phosphate and phosphoenolpyruvate: step 4/7. Involved in the biosynthesis of the chorismate, which leads to the biosynthesis of aromatic amino acids. Catalyzes the reversible NADPH linked reduction of 3-dehydroshikimate (DHSA) to yield shikimate (SA). This Thermococcus kodakarensis (strain ATCC BAA-918 / JCM 12380 / KOD1) (Pyrococcus kodakaraensis (strain KOD1)) protein is Shikimate dehydrogenase (NADP(+)).